Reading from the N-terminus, the 201-residue chain is FMN-dependent NADH:quinone oxidoreductase (201 aa).

Residues Ser-9 and 16–18 (SYS) contribute to the FMN site.

It belongs to the azoreductase type 1 family. As to quaternary structure, homodimer. It depends on FMN as a cofactor.

It carries out the reaction 2 a quinone + NADH + H(+) = 2 a 1,4-benzosemiquinone + NAD(+). The catalysed reaction is N,N-dimethyl-1,4-phenylenediamine + anthranilate + 2 NAD(+) = 2-(4-dimethylaminophenyl)diazenylbenzoate + 2 NADH + 2 H(+). In terms of biological role, quinone reductase that provides resistance to thiol-specific stress caused by electrophilic quinones. Functionally, also exhibits azoreductase activity. Catalyzes the reductive cleavage of the azo bond in aromatic azo compounds to the corresponding amines. This chain is FMN-dependent NADH:quinone oxidoreductase, found in Mesomycoplasma hyopneumoniae (strain J / ATCC 25934 / NCTC 10110) (Mycoplasma hyopneumoniae).